The primary structure comprises 111 residues: Universal stress protein B (111 aa).

A run of 2 helical transmembrane segments spans residues 1–21 and 90–110; these read MIST…NMAR and FLLT…LMIW.

It belongs to the universal stress protein B family.

Its subcellular location is the cell inner membrane. This Salmonella arizonae (strain ATCC BAA-731 / CDC346-86 / RSK2980) protein is Universal stress protein B.